We begin with the raw amino-acid sequence, 419 residues long: Innexin-2 (419 aa).

The next 4 membrane-spanning stretches (helical) occupy residues 33 to 53 (AWFTPFVLVAMTLAISCKQYF), 108 to 128 (PLVLLFQAAMFVLPYHLWNLF), 184 to 204 (INYFLLKLGFIVNCILQMVLL), and 270 to 290 (LYICFYFWLIFVFVVTTAGMI).

It belongs to the pannexin family.

The protein resides in the cell membrane. It localises to the cell junction. The protein localises to the gap junction. Structural component of the gap junctions. The polypeptide is Innexin-2 (inx-2) (Caenorhabditis elegans).